The chain runs to 122 residues: Glucagon-2 (122 aa).

Residues M1–Q21 form the signal peptide. Propeptides lie at residues N83–F86 and E122.

This sequence belongs to the glucagon family.

The protein localises to the secreted. Functionally, promotes hydrolysis of glycogen and lipids, and raises the blood sugar level. The sequence is that of Glucagon-2 (gcg2) from Lophius americanus (American angler).